A 54-amino-acid polypeptide reads, in one-letter code: SCTEKTCPGTETCCTTPQGEEGCCPYKEGVCCLDGIHCCPSGTVCDEDHRRCIQ.

The protein belongs to the granulin family. Six disulfide bonds are present. Brain.

It is found in the secreted. This Locusta migratoria (Migratory locust) protein is Pars intercerebralis major peptide D1.